The sequence spans 562 residues: Septation ring formation regulator EzrA (562 aa).

Residues 1–2 (ME) are Extracellular-facing. The helical transmembrane segment at 3–21 (FVIGLLIVLLALFAAGYFF) threads the bilayer. Residues 22–562 (RKKIYAEIDR…VEKIKADISA (541 aa)) are Cytoplasmic-facing. Coiled-coil stretches lie at residues 377–425 (YSLL…LKKT) and 470–497 (MEEA…LVEQ).

Belongs to the EzrA family. Post-translationally, may be degraded by FtsH protease.

It localises to the cell membrane. The protein resides in the membrane raft. Negative regulator of FtsZ ring formation; modulates the frequency and position of FtsZ ring formation. Inhibits FtsZ ring formation at polar sites. Interacts either with FtsZ or with one of its binding partners to promote depolymerization. This is Septation ring formation regulator EzrA from Bacillus subtilis (strain 168).